The sequence spans 130 residues: Iron-sulfur cluster insertion protein ErpA (130 aa).

C46, C116, and C118 together coordinate iron-sulfur cluster.

This sequence belongs to the HesB/IscA family. As to quaternary structure, homodimer. The cofactor is iron-sulfur cluster.

Required for insertion of 4Fe-4S clusters for at least IspG. The polypeptide is Iron-sulfur cluster insertion protein ErpA (Legionella pneumophila (strain Paris)).